Reading from the N-terminus, the 2134-residue chain is Genome polyprotein (2134 aa).

Topologically, residues Met-1–Lys-1377 are cytoplasmic. Positions Ile-781 to Lys-882 constitute an LRAT domain. Catalysis depends on residues His-791 and His-802. The active-site Acyl-thioester intermediate is the Cys-863. In terms of domain architecture, SF3 helicase spans Leu-1127 to Asp-1289. Gly-1153–Ser-1160 is an ATP binding site. Residues Trp-1378 to Val-1392 lie within the membrane without spanning it. Topologically, residues Leu-1393–Phe-2134 are cytoplasmic. Tyr-1415 carries the post-translational modification O-(5'-phospho-RNA)-tyrosine. The 213-residue stretch at Asp-1431–Leu-1643 folds into the Peptidase C3 domain. Active-site for protease 3C activity residues include His-1477, Asp-1515, and Cys-1603. Residues Asp-1880–Lys-2001 enclose the RdRp catalytic domain.

It belongs to the picornaviridae polyprotein family. In terms of processing, specific enzymatic cleavages by the viral protease in vivo yield a variety of precursors and mature proteins. During virion maturation, non-infectious particles are rendered infectious following cleavage of VP0. This maturation cleavage is followed by a conformational change of the particle. Post-translationally, VPg is uridylylated by the polymerase and is covalently linked to the 5'-end of genomic RNA. This uridylylated form acts as a nucleotide-peptide primer for the polymerase.

The protein localises to the virion. It is found in the host cytoplasm. The protein resides in the host cytoplasmic vesicle membrane. It carries out the reaction RNA(n) + a ribonucleoside 5'-triphosphate = RNA(n+1) + diphosphate. The catalysed reaction is a ribonucleoside 5'-triphosphate + H2O = a ribonucleoside 5'-diphosphate + phosphate + H(+). The enzyme catalyses Selective cleavage of Gln-|-Gly bond in the poliovirus polyprotein. In other picornavirus reactions Glu may be substituted for Gln, and Ser or Thr for Gly.. Functionally, capsid proteins VP1, VP2, and VP3 form a closed capsid enclosing the viral positive strand RNA genome. All these proteins contain a beta-sheet structure called beta-barrel jelly roll. Together they form an icosahedral capsid (T=3) composed of 60 copies of each VP1, VP2, and VP3, with a diameter of approximately 300 Angstroms. VP1 is situated at the 12 fivefold axes, whereas VP2 and VP3 are located at the quasi-sixfold axes. VP0 precursor is a component of immature procapsids. The N-terminal domain of VP0, protein VP4, is needed for the assembly of 12 pentamers into the icosahedral structure. Unlike other picornaviruses, AEV VP4 may not be myristoylated. Its function is as follows. Protein 2B and 2BC precursor affect membrane integrity and cause an increase in membrane permeability. In terms of biological role, associates with and induces structural rearrangements of intracellular membranes. It displays RNA-binding, nucleotide binding and NTPase activities. Functionally, protein 3A, via its hydrophobic domain, serves as membrane anchor. Protein 3B is covalently linked to the 5'-end of both the positive-strand and negative-strand genomic RNAs. It acts as a genome-linked replication primer. Its function is as follows. Cysteine protease that generates mature viral proteins from the precursor polyprotein. In addition to its proteolytic activity, it binds to viral RNA, and thus influences viral genome replication. RNA and substrate bind cooperatively to the protease. In terms of biological role, RNA-directed RNA polymerase 3D-POL replicates genomic and antigenomic RNA by recognizing replications specific signals. The protein is Genome polyprotein of Avian encephalomyelitis virus (strain L2Z) (AEV).